A 505-amino-acid polypeptide reads, in one-letter code: ATP synthase subunit alpha (505 aa).

The interval 118 to 138 is disordered; that stretch reads VDGLGPINTTNTRPIESPAPG. Residue 172–179 coordinates ATP; the sequence is GDRQTGKT.

The protein belongs to the ATPase alpha/beta chains family. In terms of assembly, F-type ATPases have 2 components, CF(1) - the catalytic core - and CF(0) - the membrane proton channel. CF(1) has five subunits: alpha(3), beta(3), gamma(1), delta(1), epsilon(1). CF(0) has three main subunits: a(1), b(2) and c(9-12). The alpha and beta chains form an alternating ring which encloses part of the gamma chain. CF(1) is attached to CF(0) by a central stalk formed by the gamma and epsilon chains, while a peripheral stalk is formed by the delta and b chains.

The protein resides in the cell membrane. It carries out the reaction ATP + H2O + 4 H(+)(in) = ADP + phosphate + 5 H(+)(out). Produces ATP from ADP in the presence of a proton gradient across the membrane. The alpha chain is a regulatory subunit. This chain is ATP synthase subunit alpha, found in Bacillus cereus (strain ATCC 14579 / DSM 31 / CCUG 7414 / JCM 2152 / NBRC 15305 / NCIMB 9373 / NCTC 2599 / NRRL B-3711).